Reading from the N-terminus, the 251-residue chain is 2,3-bisphosphoglycerate-dependent phosphoglycerate mutase (251 aa).

Substrate is bound by residues 8 to 15 (RHGESLWN), 21 to 22 (TG), arginine 60, 87 to 90 (ERHY), lysine 98, 114 to 115 (RR), and 183 to 184 (GN). Histidine 9 functions as the Tele-phosphohistidine intermediate in the catalytic mechanism. Glutamate 87 functions as the Proton donor/acceptor in the catalytic mechanism.

The protein belongs to the phosphoglycerate mutase family. BPG-dependent PGAM subfamily.

The catalysed reaction is (2R)-2-phosphoglycerate = (2R)-3-phosphoglycerate. Its pathway is carbohydrate degradation; glycolysis; pyruvate from D-glyceraldehyde 3-phosphate: step 3/5. Catalyzes the interconversion of 2-phosphoglycerate and 3-phosphoglycerate. The sequence is that of 2,3-bisphosphoglycerate-dependent phosphoglycerate mutase from Thermoanaerobacter sp. (strain X514).